The primary structure comprises 494 residues: MPLYSVTVKWGKEKFEGVELNTDEPPMVFKAQLFALTGVQPARQKVMVKGGTLKDDDWGNIKIKNGMTLLMMGSADALPEEPSAKTVFVEDMTEEQLASAMELPCGLTNLGNTCYMNATVQCIRSVPELKDALKRYAGALRASGEMASAQYITAALRDLFDSMDKTSSSIPPIILLQFLHMAFPQFAEKGEQGQYLQQDANECWIQMMRVLQQKLEAIEDDSVKETDSSSASAATPSKKKSLIDQFFGVEFETTMKCTESEEEEVTKGKENQLQLSCFINQEVKYLFTGLKLRLQEEITKQSPTLQRNALYIKSSKISRLPAYLTIQMVRFFYKEKESVNAKVLKDVKFPLMLDMYELCTPELQEKMVSFRSKFKDLEDKKVNQQPNTSDKKSSPQKEVKYEPFSFADDIGSNNCGYYDLQAVLTHQGRSSSSGHYVSWVKRKQDEWIKFDDDKVSIVTPEDILRLSGGGDWHIAYVLLYGPRRVEIMEEESEQ.

One can recognise a Ubiquitin-like domain in the interval 4 to 80 (YSVTVKWGKE…MMGSADALPE (77 aa)). Threonine 52 is subject to Phosphothreonine. The USP domain occupies 105 to 483 (CGLTNLGNTC…IAYVLLYGPR (379 aa)). Cysteine 114 serves as the catalytic Nucleophile. Residues serine 143 and serine 148 each carry the phosphoserine modification. Threonine 235 carries the phosphothreonine modification. 3 positions are modified to phosphoserine: serine 237, serine 302, and serine 432. The active-site Proton acceptor is histidine 435. Lysine 449 carries the N6-acetyllysine modification.

It belongs to the peptidase C19 family. USP14/UBP6 subfamily. Homodimer (Potential). Associates with the 26S proteasome. Interacts with FANCC, CXCR4 and ERN1. Interacts with TRIM14; this interaction recruits USP14 to cleave ubiquitin chains of CGAS and KDM4D.

The protein localises to the cytoplasm. Its subcellular location is the cell membrane. It carries out the reaction Thiol-dependent hydrolysis of ester, thioester, amide, peptide and isopeptide bonds formed by the C-terminal Gly of ubiquitin (a 76-residue protein attached to proteins as an intracellular targeting signal).. Proteasome-associated deubiquitinase which releases ubiquitin from the proteasome targeted ubiquitinated proteins. Ensures the regeneration of ubiquitin at the proteasome. Is a reversibly associated subunit of the proteasome and a large fraction of proteasome-free protein exists within the cell. Required for the degradation of the chemokine receptor CXCR4 which is critical for CXCL12-induced cell chemotaxis. Also serves as a physiological inhibitor of endoplasmic reticulum-associated degradation (ERAD) under the non-stressed condition by inhibiting the degradation of unfolded endoplasmic reticulum proteins via interaction with ERN1. Indispensable for synaptic development and function at neuromuscular junctions (NMJs). Plays a role in the innate immune defense against viruses by stabilizing the viral DNA sensor CGAS and thus inhibiting its autophagic degradation. Inhibits OPTN-mediated selective autophagic degradation of KDM4D and thereby negatively regulates H3K9me2 and H3K9me3. This chain is Ubiquitin carboxyl-terminal hydrolase 14 (USP14), found in Homo sapiens (Human).